A 382-amino-acid chain; its full sequence is Chaperone protein DnaJ 2 (382 aa).

Residues D4–G68 form the J domain. The CR-type zinc-finger motif lies at G132–R214. Zn(2+) contacts are provided by C145, C148, C162, C165, C188, C191, C202, and C205. CXXCXGXG motif repeat units follow at residues C145 to G152, C162 to G169, C188 to G195, and C202 to G209.

This sequence belongs to the DnaJ family. Homodimer. Interacts with RNase J. Zn(2+) serves as cofactor.

Its subcellular location is the cytoplasm. Participates actively in the response to hyperosmotic and heat shock by preventing the aggregation of stress-denatured proteins and by disaggregating proteins, also in an autonomous, DnaK-independent fashion. Unfolded proteins bind initially to DnaJ; upon interaction with the DnaJ-bound protein, DnaK hydrolyzes its bound ATP, resulting in the formation of a stable complex. GrpE releases ADP from DnaK; ATP binding to DnaK triggers the release of the substrate protein, thus completing the reaction cycle. Several rounds of ATP-dependent interactions between DnaJ, DnaK and GrpE are required for fully efficient folding. Also involved, together with DnaK and GrpE, in the DNA replication of plasmids through activation of initiation proteins. Inhibits the beta-lactamase and RNase activity of RNase J. This chain is Chaperone protein DnaJ 2, found in Mycobacterium tuberculosis (strain ATCC 25618 / H37Rv).